The sequence spans 250 residues: uncharacterized protein (250 aa).

Over residues 207-226 (LNDRDAINKSEEARKAREEV) the composition is skewed to basic and acidic residues. The tract at residues 207–250 (LNDRDAINKSEEARKAREEVFIPSEPSKPSIASKRSSASKSTKS) is disordered. The span at 233–250 (SKPSIASKRSSASKSTKS) shows a compositional bias: low complexity.

The protein localises to the plastid. The protein resides in the chloroplast. This is an uncharacterized protein from Chlorella vulgaris (Green alga).